We begin with the raw amino-acid sequence, 528 residues long: uncharacterized protein (528 aa).

An FAD-binding site is contributed by 6 to 35 (DYVVVGTGSAGAVVASRLSTDPATTVVALE). His-468 (proton acceptor) is an active-site residue.

The protein belongs to the GMC oxidoreductase family. Requires FAD as cofactor.

This is an uncharacterized protein from Mycobacterium bovis (strain ATCC BAA-935 / AF2122/97).